The chain runs to 429 residues: Adenylosuccinate synthetase (429 aa).

GTP-binding positions include G12–K18 and G40–T42. Residue D13 is the Proton acceptor of the active site. Mg(2+) is bound by residues D13 and G40. Residues D13–K16, N38–H41, T128, R142, Q223, T238, and R302 each bind IMP. H41 functions as the Proton donor in the catalytic mechanism. T298–R304 is a substrate binding site. GTP is bound by residues R304, S330–D332, and S412–G414.

The protein belongs to the adenylosuccinate synthetase family. In terms of assembly, homodimer. Mg(2+) is required as a cofactor.

The protein localises to the cytoplasm. It catalyses the reaction IMP + L-aspartate + GTP = N(6)-(1,2-dicarboxyethyl)-AMP + GDP + phosphate + 2 H(+). It functions in the pathway purine metabolism; AMP biosynthesis via de novo pathway; AMP from IMP: step 1/2. Its function is as follows. Plays an important role in the de novo pathway of purine nucleotide biosynthesis. Catalyzes the first committed step in the biosynthesis of AMP from IMP. The chain is Adenylosuccinate synthetase from Bacillus cereus (strain ZK / E33L).